The following is a 689-amino-acid chain: DNA ligase (689 aa).

Residues 32-36, 81-82, and E113 contribute to the NAD(+) site; these read DAEYD and SL. The active-site N6-AMP-lysine intermediate is the K115. NAD(+) is bound by residues R136, E176, K306, and K330. Residues C424, C427, C442, and C448 each contribute to the Zn(2+) site. In terms of domain architecture, BRCT spans 606–689; it reads AEELPLAEQI…ALLAEHGITI (84 aa).

Belongs to the NAD-dependent DNA ligase family. LigA subfamily. Mg(2+) is required as a cofactor. It depends on Mn(2+) as a cofactor.

The catalysed reaction is NAD(+) + (deoxyribonucleotide)n-3'-hydroxyl + 5'-phospho-(deoxyribonucleotide)m = (deoxyribonucleotide)n+m + AMP + beta-nicotinamide D-nucleotide.. Functionally, DNA ligase that catalyzes the formation of phosphodiester linkages between 5'-phosphoryl and 3'-hydroxyl groups in double-stranded DNA using NAD as a coenzyme and as the energy source for the reaction. It is essential for DNA replication and repair of damaged DNA. This is DNA ligase from Colwellia psychrerythraea (strain 34H / ATCC BAA-681) (Vibrio psychroerythus).